Here is a 156-residue protein sequence, read N- to C-terminus: ATP synthase subunit b (156 aa).

Residues 11 to 31 (AIAFVLFVLFCMKYVWPPLMA) form a helical membrane-spanning segment.

This sequence belongs to the ATPase B chain family. As to quaternary structure, F-type ATPases have 2 components, F(1) - the catalytic core - and F(0) - the membrane proton channel. F(1) has five subunits: alpha(3), beta(3), gamma(1), delta(1), epsilon(1). F(0) has three main subunits: a(1), b(2) and c(10-14). The alpha and beta chains form an alternating ring which encloses part of the gamma chain. F(1) is attached to F(0) by a central stalk formed by the gamma and epsilon chains, while a peripheral stalk is formed by the delta and b chains.

The protein localises to the cell inner membrane. Functionally, f(1)F(0) ATP synthase produces ATP from ADP in the presence of a proton or sodium gradient. F-type ATPases consist of two structural domains, F(1) containing the extramembraneous catalytic core and F(0) containing the membrane proton channel, linked together by a central stalk and a peripheral stalk. During catalysis, ATP synthesis in the catalytic domain of F(1) is coupled via a rotary mechanism of the central stalk subunits to proton translocation. Its function is as follows. Component of the F(0) channel, it forms part of the peripheral stalk, linking F(1) to F(0). The protein is ATP synthase subunit b of Sodalis glossinidius (strain morsitans).